The chain runs to 289 residues: Ribosomal RNA small subunit methyltransferase A (289 aa).

N28, L30, G55, E77, D103, and N122 together coordinate S-adenosyl-L-methionine.

Belongs to the class I-like SAM-binding methyltransferase superfamily. rRNA adenine N(6)-methyltransferase family. RsmA subfamily.

Its subcellular location is the cytoplasm. The enzyme catalyses adenosine(1518)/adenosine(1519) in 16S rRNA + 4 S-adenosyl-L-methionine = N(6)-dimethyladenosine(1518)/N(6)-dimethyladenosine(1519) in 16S rRNA + 4 S-adenosyl-L-homocysteine + 4 H(+). Specifically dimethylates two adjacent adenosines (A1518 and A1519) in the loop of a conserved hairpin near the 3'-end of 16S rRNA in the 30S particle. May play a critical role in biogenesis of 30S subunits. The polypeptide is Ribosomal RNA small subunit methyltransferase A (Jannaschia sp. (strain CCS1)).